Here is a 108-residue protein sequence, read N- to C-terminus: Small proline-rich protein 2H (108 aa).

Over residues 1–11 the composition is skewed to low complexity; it reads MSYQQQQCKQP. The segment at 1 to 22 is disordered; that stretch reads MSYQQQQCKQPCQPPPVCPPPQ. The segment covering 12 to 22 has biased composition (pro residues); sequence CQPPPVCPPPQ. 7 repeat units span residues 21–29, 30–38, 39–47, 48–56, 57–65, 66–74, and 75–83. Residues 21–83 are 7 X 9 AA tandem repeats of P-[KQ]-C-[PT]-E-P-C-P-P; the sequence is PQCPEPCPPP…PPKCTEPCPP (63 aa). Residues 83–108 are disordered; the sequence is PPSYQQKCPSVQPSPPCQQKCPPKNK. The segment covering 87 to 108 has biased composition (low complexity); that stretch reads QQKCPSVQPSPPCQQKCPPKNK.

It belongs to the cornifin (SPRR) family. As to expression, expressed weakly in uterus.

Its subcellular location is the cytoplasm. Its function is as follows. Cross-linked envelope protein of keratinocytes. It is a keratinocyte protein that first appears in the cell cytosol, but ultimately becomes cross-linked to membrane proteins by transglutaminase. All that results in the formation of an insoluble envelope beneath the plasma membrane. This Mus musculus (Mouse) protein is Small proline-rich protein 2H (Sprr2h).